The sequence spans 193 residues: ATP-dependent Clp protease proteolytic subunit (193 aa).

The Nucleophile role is filled by S97. H122 is an active-site residue.

This sequence belongs to the peptidase S14 family. As to quaternary structure, fourteen ClpP subunits assemble into 2 heptameric rings which stack back to back to give a disk-like structure with a central cavity, resembling the structure of eukaryotic proteasomes.

Its subcellular location is the cytoplasm. It carries out the reaction Hydrolysis of proteins to small peptides in the presence of ATP and magnesium. alpha-casein is the usual test substrate. In the absence of ATP, only oligopeptides shorter than five residues are hydrolyzed (such as succinyl-Leu-Tyr-|-NHMec, and Leu-Tyr-Leu-|-Tyr-Trp, in which cleavage of the -Tyr-|-Leu- and -Tyr-|-Trp bonds also occurs).. In terms of biological role, cleaves peptides in various proteins in a process that requires ATP hydrolysis. Has a chymotrypsin-like activity. Plays a major role in the degradation of misfolded proteins. This Fusobacterium nucleatum subsp. nucleatum (strain ATCC 25586 / DSM 15643 / BCRC 10681 / CIP 101130 / JCM 8532 / KCTC 2640 / LMG 13131 / VPI 4355) protein is ATP-dependent Clp protease proteolytic subunit.